The following is a 75-amino-acid chain: UPF0150 protein TM_1313 (75 aa).

Belongs to the UPF0150 family.

This Thermotoga maritima (strain ATCC 43589 / DSM 3109 / JCM 10099 / NBRC 100826 / MSB8) protein is UPF0150 protein TM_1313.